The sequence spans 234 residues: Thiamine-phosphate synthase (234 aa).

Residues 65–69 (QYRNK) and Asn97 contribute to the 4-amino-2-methyl-5-(diphosphooxymethyl)pyrimidine site. Residues Asp98 and Asp117 each coordinate Mg(2+). Ser136 contacts 4-amino-2-methyl-5-(diphosphooxymethyl)pyrimidine. 163–165 (SHT) contacts 2-[(2R,5Z)-2-carboxy-4-methylthiazol-5(2H)-ylidene]ethyl phosphate. Lys166 is a 4-amino-2-methyl-5-(diphosphooxymethyl)pyrimidine binding site. 2-[(2R,5Z)-2-carboxy-4-methylthiazol-5(2H)-ylidene]ethyl phosphate-binding positions include Gly192 and 212–213 (IS).

Belongs to the thiamine-phosphate synthase family. The cofactor is Mg(2+).

The enzyme catalyses 2-[(2R,5Z)-2-carboxy-4-methylthiazol-5(2H)-ylidene]ethyl phosphate + 4-amino-2-methyl-5-(diphosphooxymethyl)pyrimidine + 2 H(+) = thiamine phosphate + CO2 + diphosphate. It carries out the reaction 2-(2-carboxy-4-methylthiazol-5-yl)ethyl phosphate + 4-amino-2-methyl-5-(diphosphooxymethyl)pyrimidine + 2 H(+) = thiamine phosphate + CO2 + diphosphate. The catalysed reaction is 4-methyl-5-(2-phosphooxyethyl)-thiazole + 4-amino-2-methyl-5-(diphosphooxymethyl)pyrimidine + H(+) = thiamine phosphate + diphosphate. The protein operates within cofactor biosynthesis; thiamine diphosphate biosynthesis; thiamine phosphate from 4-amino-2-methyl-5-diphosphomethylpyrimidine and 4-methyl-5-(2-phosphoethyl)-thiazole: step 1/1. Functionally, condenses 4-methyl-5-(beta-hydroxyethyl)thiazole monophosphate (THZ-P) and 2-methyl-4-amino-5-hydroxymethyl pyrimidine pyrophosphate (HMP-PP) to form thiamine monophosphate (TMP). This is Thiamine-phosphate synthase from Xylella fastidiosa (strain 9a5c).